The following is a 282-amino-acid chain: Bis(5'-nucleosyl)-tetraphosphatase, symmetrical (282 aa).

This sequence belongs to the Ap4A hydrolase family.

It catalyses the reaction P(1),P(4)-bis(5'-adenosyl) tetraphosphate + H2O = 2 ADP + 2 H(+). Its function is as follows. Hydrolyzes diadenosine 5',5'''-P1,P4-tetraphosphate to yield ADP. The polypeptide is Bis(5'-nucleosyl)-tetraphosphatase, symmetrical (Citrobacter koseri (strain ATCC BAA-895 / CDC 4225-83 / SGSC4696)).